The following is a 34-amino-acid chain: Photosystem II reaction center protein M (34 aa).

A helical membrane pass occupies residues 7 to 27 (GFVASLLFVLVPTVFLIILFI).

Belongs to the PsbM family. As to quaternary structure, PSII is composed of 1 copy each of membrane proteins PsbA, PsbB, PsbC, PsbD, PsbE, PsbF, PsbH, PsbI, PsbJ, PsbK, PsbL, PsbM, PsbT, PsbX, PsbY, PsbZ, Psb30/Ycf12, peripheral proteins PsbO, CyanoQ (PsbQ), PsbU, PsbV and a large number of cofactors. It forms dimeric complexes.

It is found in the cellular thylakoid membrane. Its function is as follows. One of the components of the core complex of photosystem II (PSII). PSII is a light-driven water:plastoquinone oxidoreductase that uses light energy to abstract electrons from H(2)O, generating O(2) and a proton gradient subsequently used for ATP formation. It consists of a core antenna complex that captures photons, and an electron transfer chain that converts photonic excitation into a charge separation. This subunit is found at the monomer-monomer interface. This Synechococcus sp. (strain WH7803) protein is Photosystem II reaction center protein M.